Here is a 701-residue protein sequence, read N- to C-terminus: Polyribonucleotide nucleotidyltransferase (701 aa).

The Mg(2+) site is built by D490 and D496. The 60-residue stretch at 557–616 folds into the KH domain; it reads PKVETMTIKPEKIRDVIGPGGKKINEIIDETGVKLDIEQDGTIFIGAVDQDMINRAREII. The S1 motif domain maps to 626 to 694; the sequence is GQVYNAKVRR…DKGRVNASHR (69 aa).

This sequence belongs to the polyribonucleotide nucleotidyltransferase family. The cofactor is Mg(2+).

Its subcellular location is the cytoplasm. The catalysed reaction is RNA(n+1) + phosphate = RNA(n) + a ribonucleoside 5'-diphosphate. Its function is as follows. Involved in mRNA degradation. Catalyzes the phosphorolysis of single-stranded polyribonucleotides processively in the 3'- to 5'-direction. In Staphylococcus carnosus (strain TM300), this protein is Polyribonucleotide nucleotidyltransferase.